Here is a 330-residue protein sequence, read N- to C-terminus: D-alanine--D-alanine ligase (330 aa).

The ATP-grasp domain maps to Asn122–Arg323. ATP is bound at residue Ile151–Thr206. Asp277, Glu290, and Asn292 together coordinate Mg(2+).

Belongs to the D-alanine--D-alanine ligase family. Mg(2+) serves as cofactor. It depends on Mn(2+) as a cofactor.

The protein localises to the cytoplasm. It catalyses the reaction 2 D-alanine + ATP = D-alanyl-D-alanine + ADP + phosphate + H(+). The protein operates within cell wall biogenesis; peptidoglycan biosynthesis. Its function is as follows. Cell wall formation. The polypeptide is D-alanine--D-alanine ligase (Porphyromonas gingivalis (strain ATCC BAA-308 / W83)).